Reading from the N-terminus, the 1051-residue chain is Inactive tyrosine-protein kinase 7 (1051 aa).

The first 22 residues, 1–22 (MAALRALLLLLAVGAQAAIRFA), serve as a signal peptide directing secretion. Ig-like C2-type domains are found at residues 23-105 (KEPY…ANAS), 115-204 (SVVL…DNFT), 213-298 (PQAV…KATL), 308-388 (PFSP…LSIT), 393-472 (PKWV…GSIE), 487-566 (PPPQ…ATVQ), and 573-661 (VTFK…AFLY). The Extracellular portion of the chain corresponds to 23–685 (KEPYSQDALH…SHTPYKMIQT (663 aa)). Cysteines 40 and 88 form a disulfide. An N-linked (GlcNAc...) asparagine glycan is attached at Asn103. An intrachain disulfide couples Cys137 to Cys187. Asn202, Asn255, and Asn264 each carry an N-linked (GlcNAc...) asparagine glycan. Disulfide bonds link Cys234–Cys282, Cys326–Cys372, Cys414–Cys462, Cys505–Cys551, and Cys594–Cys645. N-linked (GlcNAc...) asparagine glycans are attached at residues Asn444, Asn548, and Asn627. The helical transmembrane segment at 686–706 (IGLSVGAAVAYIIIVLGLMFY) threads the bilayer. Over 707–1051 (CKKRRKAKRL…LGDSPADSKA (345 aa)) the chain is Cytoplasmic. The Protein kinase; inactive domain maps to 777-1048 (LQTITTLGRG…AAALGDSPAD (272 aa)).

This sequence belongs to the protein kinase superfamily. Tyr protein kinase family. Insulin receptor subfamily. Expressed in bone marrow, spleen, bursa, thymus and brain. Weakly expressed in fibroblasts. Also expressed in embryonic liver.

The protein resides in the membrane. Functionally, inactive tyrosine kinase involved in Wnt signaling. pathway. This chain is Inactive tyrosine-protein kinase 7 (PTK7), found in Gallus gallus (Chicken).